A 363-amino-acid chain; its full sequence is Serine/threonine-protein kinase SRK2A (363 aa).

The 257-residue stretch at Tyr4–Phe260 folds into the Protein kinase domain. ATP-binding positions include Ile10 to Ala18 and Lys33. The Proton acceptor role is filled by Asp123. Residues Ser306–Ser363 are disordered. Gly residues predominate over residues Gly310 to Asp319. Acidic residues predominate over residues Gly322–Tyr347. A compositionally biased stretch (basic and acidic residues) spans Asp348–Ser363.

This sequence belongs to the protein kinase superfamily. Ser/Thr protein kinase family. As to quaternary structure, interacts with TOPP1. In terms of tissue distribution, expressed in seedlings.

The catalysed reaction is L-seryl-[protein] + ATP = O-phospho-L-seryl-[protein] + ADP + H(+). It carries out the reaction L-threonyl-[protein] + ATP = O-phospho-L-threonyl-[protein] + ADP + H(+). The sequence is that of Serine/threonine-protein kinase SRK2A (SRK2A) from Arabidopsis thaliana (Mouse-ear cress).